The sequence spans 803 residues: Dynein axonemal intermediate chain 4 (803 aa).

Residues 1 to 33 (MPSSPTSTRKQTNFTASVSAQSRKSISFGNPKS) show a composition bias toward polar residues. Disordered stretches follow at residues 1 to 41 (MPSS…GYAG), 88 to 109 (LYHP…SQEG), and 143 to 163 (STVS…LEDP). Over residues 143 to 155 (STVSKSSISTTES) the composition is skewed to low complexity. WD repeat units follow at residues 492–532 (QSPY…NTPV), 541–589 (KHLG…DCHD), 616–656 (SRQA…QYLE), 660–700 (GHKG…PFFT), 703–742 (PTTY…LDPL), and 748–787 (NPGI…TPTE).

As to quaternary structure, part of the multisubunit axonemal dynein complex formed at least of two heavy chains and a number of intermediate and light chains. Associated with axonemal dynein subunits such as, DNAH2, DNAI3, and DYNLT1. Interacts with DYNLT1.

The protein resides in the cytoplasm. The protein localises to the cytoskeleton. Its subcellular location is the flagellum axoneme. It localises to the cilium axoneme. It is found in the dynein axonemal particle. Plays a critical role in the assembly of axonemal dynein complex, thereby playing a role in ciliary motility. In Rattus norvegicus (Rat), this protein is Dynein axonemal intermediate chain 4.